A 576-amino-acid polypeptide reads, in one-letter code: Arginine--tRNA ligase (576 aa).

A 'HIGH' region motif is present at residues P122–H132.

Belongs to the class-I aminoacyl-tRNA synthetase family. Monomer.

It localises to the cytoplasm. It carries out the reaction tRNA(Arg) + L-arginine + ATP = L-arginyl-tRNA(Arg) + AMP + diphosphate. This is Arginine--tRNA ligase from Yersinia pseudotuberculosis serotype I (strain IP32953).